We begin with the raw amino-acid sequence, 254 residues long: Coproheme decarboxylase (254 aa).

Fe-coproporphyrin III-binding positions include Arg136, 150–154 (YPMDK), His177, Gln190, and Ser228. Tyr150 is a catalytic residue.

Belongs to the ChdC family. Type 1 subfamily. It depends on Fe-coproporphyrin III as a cofactor.

The enzyme catalyses Fe-coproporphyrin III + 2 H2O2 + 2 H(+) = heme b + 2 CO2 + 4 H2O. It catalyses the reaction Fe-coproporphyrin III + H2O2 + H(+) = harderoheme III + CO2 + 2 H2O. The catalysed reaction is harderoheme III + H2O2 + H(+) = heme b + CO2 + 2 H2O. The protein operates within porphyrin-containing compound metabolism; protoheme biosynthesis. In terms of biological role, involved in coproporphyrin-dependent heme b biosynthesis. Catalyzes the decarboxylation of Fe-coproporphyrin III (coproheme) to heme b (protoheme IX), the last step of the pathway. The reaction occurs in a stepwise manner with a three-propionate intermediate. This chain is Coproheme decarboxylase, found in Bacillus licheniformis (strain ATCC 14580 / DSM 13 / JCM 2505 / CCUG 7422 / NBRC 12200 / NCIMB 9375 / NCTC 10341 / NRRL NRS-1264 / Gibson 46).